The following is a 216-amino-acid chain: Peptide methionine sulfoxide reductase MsrA (216 aa).

The active site involves C58.

The protein belongs to the MsrA Met sulfoxide reductase family.

It carries out the reaction L-methionyl-[protein] + [thioredoxin]-disulfide + H2O = L-methionyl-(S)-S-oxide-[protein] + [thioredoxin]-dithiol. The catalysed reaction is [thioredoxin]-disulfide + L-methionine + H2O = L-methionine (S)-S-oxide + [thioredoxin]-dithiol. Functionally, has an important function as a repair enzyme for proteins that have been inactivated by oxidation. Catalyzes the reversible oxidation-reduction of methionine sulfoxide in proteins to methionine. This Azotobacter vinelandii (strain DJ / ATCC BAA-1303) protein is Peptide methionine sulfoxide reductase MsrA.